A 125-amino-acid polypeptide reads, in one-letter code: Class III hydrophobin G (125 aa).

A signal peptide spans 1 to 20 (MKPSIVTFLMLAAVTAAVSA). 4 disulfides stabilise this stretch: cysteine 54/cysteine 107, cysteine 60/cysteine 101, cysteine 61/cysteine 94, and cysteine 108/cysteine 122.

It belongs to the fungal hydrophobin family. Self-assembles to form functional amyloid fibrils called rodlets. Self-assembly into fibrillar rodlets occurs spontaneously at hydrophobic:hydrophilic interfaces and the rodlets further associate laterally to form amphipathic monolayers.

The protein resides in the secreted. It is found in the cell wall. In terms of biological role, aerial growth, conidiation, and dispersal of filamentous fungi in the environment rely upon a capability of their secreting small amphipathic proteins called hydrophobins (HPBs) with low sequence identity. Class I can self-assemble into an outermost layer of rodlet bundles on aerial cell surfaces, conferring cellular hydrophobicity that supports fungal growth, development and dispersal; whereas Class II form highly ordered films at water-air interfaces through intermolecular interactions but contribute nothing to the rodlet structure. RodF and rodG belong to Class III, which contains hydrophobins with intermediate (between classes I and II) or atypical characteristics. RodG, unlike rodA, is not required for rodlet formation. In Aspergillus fumigatus (strain ATCC MYA-4609 / CBS 101355 / FGSC A1100 / Af293) (Neosartorya fumigata), this protein is Class III hydrophobin G.